The primary structure comprises 551 residues: Interferon-induced, double-stranded RNA-activated protein kinase (551 aa).

Ala-2 is subject to N-acetylalanine. Residues 2 to 180 (AGDLSAGFFM…SVKSDYLSSG (179 aa)) are (Microbial infection) Interaction with HCV NS5A. Residues 9–77 (FFMEELNTYR…AKLAVEILNK (69 aa)) enclose the DRBM 1 domain. Residue Lys-69 forms a Glycyl lysine isopeptide (Lys-Gly) (interchain with G-Cter in ISG15) linkage. A Phosphoserine modification is found at Ser-83. Thr-88, Thr-89, and Thr-90 each carry phosphothreonine; by autocatalysis. Residues 100–167 (NYIGLINRIA…AKLAYLQILS (68 aa)) enclose the DRBM 2 domain. Tyr-101 carries the phosphotyrosine; by autocatalysis modification. Lys-159 participates in a covalent cross-link: Glycyl lysine isopeptide (Lys-Gly) (interchain with G-Cter in ISG15). Tyr-162 carries the post-translational modification Phosphotyrosine; by autocatalysis. A compositionally biased stretch (polar residues) spans 202-215 (SSSEGDFSADTSEI). The interval 202–222 (SSSEGDFSADTSEINSNSDSL) is disordered. Ser-242 bears the Phosphoserine; by autocatalysis mark. Residues Thr-255 and Thr-258 each carry the phosphothreonine; by autocatalysis modification. Residues 266–362 (DFKEIELIGS…NSSRSKTKCL (97 aa)) form a dimerization region. The segment at 266–551 (DFKEIELIGS…SPEKNERHTC (286 aa)) is interaction with TRAF5. The Protein kinase domain occupies 267 to 538 (FKEIELIGSG…TSEILRTLTV (272 aa)). 273-281 (IGSGGFGQV) lines the ATP pocket. Tyr-293 carries the post-translational modification Phosphotyrosine; by autocatalysis. ATP is bound at residue Lys-296. Repeat copies occupy residues 331 to 343 (DYDP…SLES) and 345 to 357 (DYDP…SSRS). The segment at 331-357 (DYDPETSDDSLESSDYDPENSKNSSRS) is 2 X 13 AA approximate repeats. The tract at residues 379-496 (EKRRGEKLDK…TAFETSKFFT (118 aa)) is interaction with EIF2S1/EIF-2ALPHA. Asp-414 serves as the catalytic Proton acceptor. Asp-432 serves as a coordination point for Mg(2+). 2 positions are modified to phosphothreonine; by autocatalysis: Thr-446 and Thr-451. A phosphoserine mark is found at Ser-456 and Ser-542.

The protein belongs to the protein kinase superfamily. Ser/Thr protein kinase family. GCN2 subfamily. In terms of assembly, homodimer. Interacts with STRBP. Interacts with DNAJC3. Forms a complex with FANCA, FANCC, FANCG and HSP70. Interacts with ADAR/ADAR1. Interacts with IRS1. The inactive form interacts with NCK1 and GSN. Interacts (via the kinase catalytic domain) with STAT3 (via SH2 domain), TRAF2 (C-terminus), TRAF5 (C-terminus) and TRAF6 (C-terminus). Interacts with MAP2K6, IKBKB/IKKB, NPM1, TARBP2, NLRP1, NLRP3, NLRC4 and AIM2. Interacts (via DRBM 1 domain) with DUS2L (via DRBM domain). Interacts with DHX9 (via N-terminus) and this interaction is dependent upon activation of the kinase. Interacts with EIF2S1/EIF-2ALPHA; this interaction induces a conformational change in EIF2S1 and its phosphorylation by EIF2AK2. As to quaternary structure, (Microbial infection) Interacts with human cytomegalovirus (HCMV) TRS1; this interaction retains EIF2AK2 to the nucleus and prevents its activation. (Microbial infection) Interacts with vaccinia virus protein K3 (K3L); this interaction inhibits EIF2AK2. In terms of assembly, (Microbial infection) Interacts with human herpes simplex virus 1 (HHV-1) protein US11 in an RNA-dependent manner. As to quaternary structure, (Microbial infection) The inactive form interacts with Toscana virus (TOS) NSS. (Microbial infection) Interacts with herpes virus 8 protein v-IRF2; this interaction inhibits EIF2AK2 activation. In terms of assembly, (Microbial infection) Interacts with vaccinia protein E3. As to quaternary structure, (Microbial infection) Interacts (via N-terminus) with Hepatitis C virus (HCV) mature core protein (via N-terminus); this interaction induces the autophosphorylation of EIF2AK2. (Microbial infection) Interacts with Hepatitis C virus (HCV) non-structural protein 5A (NS5A); this interaction leads to disruption of EIF2AK2 dimerization by NS5A. In terms of assembly, (Microbial infection) Interacts with Hepatitis C virus (HCV) envelope glycoprotein E2; this interaction inhibits EIF2AK2 and blocks its inhibitory effect on protein synthesis and cell growth. As to quaternary structure, (Microbial infection) Interacts with human respiratory syncytial virus (HRSV) nucleoprotein; this interaction inhibits EIF2AK2 phosphorylation of EIF2S1 and blocks EIF2AK2-mediated translation shutoff. (Microbial infection) Interacts with human herpesvirus 8 protein MTA/ORF57; this interaction inhibits stress granule formation. Mg(2+) serves as cofactor. Post-translationally, autophosphorylated on several Ser, Thr and Tyr residues. Autophosphorylation of Thr-451 is dependent on Thr-446 and is stimulated by dsRNA binding and dimerization. Autophosphorylation apparently leads to the activation of the kinase. Tyrosine autophosphorylation is essential for efficient dsRNA-binding, dimerization, and kinase activation. Highly expressed in thymus, spleen and bone marrow compared to non-hematopoietic tissues such as small intestine, liver, or kidney tissues. Colocalizes with GSK3B and TAU in the Alzheimer disease (AD) brain. Elevated levels seen in breast and colon carcinomas, and which correlates with tumor progression and invasiveness or risk of progression.

It localises to the cytoplasm. The protein resides in the nucleus. It is found in the perinuclear region. The catalysed reaction is L-seryl-[protein] + ATP = O-phospho-L-seryl-[protein] + ADP + H(+). The enzyme catalyses L-threonyl-[protein] + ATP = O-phospho-L-threonyl-[protein] + ADP + H(+). It carries out the reaction L-tyrosyl-[protein] + ATP = O-phospho-L-tyrosyl-[protein] + ADP + H(+). Its activity is regulated as follows. Initially produced in an inactive form and is activated by binding to viral dsRNA, which causes dimerization and autophosphorylation in the activation loop and stimulation of function. ISGylation can activate it in the absence of viral infection. Can also be activated by heparin, pro-inflammatory stimuli, growth factors, cytokines, oxidative stress and the cellular protein PRKRA. Activity is markedly stimulated by manganese ions. Activation is blocked by the viral components HIV-1 Tat protein and large amounts of HIV-1 trans-activation response (TAR) RNA element as well as by the cellular proteins TARBP2, DUS2L, NPM1, NCK1 and ADAR. Down-regulated by Toscana virus (TOS) and Rift valley fever virus (RVFV) NSS which promote its proteasomal degradation. Inhibited by vaccinia virus protein E3, probably via dsRNA sequestering. Functionally, IFN-induced dsRNA-dependent serine/threonine-protein kinase that phosphorylates the alpha subunit of eukaryotic translation initiation factor 2 (EIF2S1/eIF-2-alpha) and plays a key role in the innate immune response to viral infection. Inhibits viral replication via the integrated stress response (ISR): EIF2S1/eIF-2-alpha phosphorylation in response to viral infection converts EIF2S1/eIF-2-alpha in a global protein synthesis inhibitor, resulting to a shutdown of cellular and viral protein synthesis, while concomitantly initiating the preferential translation of ISR-specific mRNAs, such as the transcriptional activator ATF4. Exerts its antiviral activity on a wide range of DNA and RNA viruses including hepatitis C virus (HCV), hepatitis B virus (HBV), measles virus (MV) and herpes simplex virus 1 (HHV-1). Also involved in the regulation of signal transduction, apoptosis, cell proliferation and differentiation: phosphorylates other substrates including p53/TP53, PPP2R5A, DHX9, ILF3, IRS1 and the HHV-1 viral protein US11. In addition to serine/threonine-protein kinase activity, also has tyrosine-protein kinase activity and phosphorylates CDK1 at 'Tyr-4' upon DNA damage, facilitating its ubiquitination and proteasomal degradation. Either as an adapter protein and/or via its kinase activity, can regulate various signaling pathways (p38 MAP kinase, NF-kappa-B and insulin signaling pathways) and transcription factors (JUN, STAT1, STAT3, IRF1, ATF3) involved in the expression of genes encoding pro-inflammatory cytokines and IFNs. Activates the NF-kappa-B pathway via interaction with IKBKB and TRAF family of proteins and activates the p38 MAP kinase pathway via interaction with MAP2K6. Can act as both a positive and negative regulator of the insulin signaling pathway (ISP). Negatively regulates ISP by inducing the inhibitory phosphorylation of insulin receptor substrate 1 (IRS1) at 'Ser-312' and positively regulates ISP via phosphorylation of PPP2R5A which activates FOXO1, which in turn up-regulates the expression of insulin receptor substrate 2 (IRS2). Can regulate NLRP3 inflammasome assembly and the activation of NLRP3, NLRP1, AIM2 and NLRC4 inflammasomes. Plays a role in the regulation of the cytoskeleton by binding to gelsolin (GSN), sequestering the protein in an inactive conformation away from actin. The protein is Interferon-induced, double-stranded RNA-activated protein kinase (EIF2AK2) of Homo sapiens (Human).